The following is a 346-amino-acid chain: Putative D-xylulose reductase (346 aa).

Residues Cys-39, His-64, and Glu-150 each coordinate Zn(2+).

This sequence belongs to the zinc-containing alcohol dehydrogenase family. It depends on Zn(2+) as a cofactor.

The enzyme catalyses xylitol + NAD(+) = D-xylulose + NADH + H(+). The sequence is that of Putative D-xylulose reductase from Rhizobium meliloti (strain 1021) (Ensifer meliloti).